The primary structure comprises 1984 residues: MELTPGAQQQGINYQELTSGWQDVKSMMLVPEPTRKFPSGPLLTSVRFSNLSPESQQQDVKSLEFTVEPKLQSVKHVKLSSVSLQQTIKSVELAPGSLPQRVKYGEQTPRTNYQIMESSELIPRPGHQFAKYAEMIPQPKYQIPKSANLISIPIYHATESSEMAQGLAYKGIDTVEKSVGLTPKLTGRAKESLGMLLQPDLQVPKFVDLTPMVRDQGSKFLGLTPEKSYQILETMELLSQSRPRVKDVGELYMKPLQQTVEYEGITPELKHYFTEAMGLTAEARIQANEFFGMTPKPTSQATGFAERSPRLCPQNLECVEVISEKRLQGEESVVLIPKSLHHVPDSASGMTPGLGHRVPESVELTSKSGVQVEKTLQLTPKPQHHVGSPGIISGLGHQVPESVNLTCKQWLQMEESLEVPLKQTSQVIGHEESVELTSEARQHREVSMGLTKSKNQSMKSPGTTPGPLGRIVEFMRISPEPLDQVTESARTQLQVAQSEEVILIDVPKVVQSVKVTPGPPFQIVKSVTIPRPTPQMVEYIELTPKLQYVRPSEHHTGPCLQDVKSTKLITKPKHQILETVELTGFQIVKTMLIPGPSLQIVKSEELAPGPIPQVVEPIGVALESGIEAINCVDLLPRPHLQELIVPAELTPSPCTQVKSAELTSPQTSPFEEHTILTHKQGLQAVKSTVIKTEPPKVMETEDLNLGHVCQNRDCQKLTSEELQVGTDFSRFLQSSSTTLISSSVRTASELGGLWDSGIQEVSRALDIKNPGTDILQPEETYIDPTMIQSLTFPLALHNQSSDKTANIVENPCPEILGVDVISKETTKRKQMEELENSLQRHLPQSWRSRSRTFQAESGVQKGLIKSFPGRQHNVWESHAWRQRLPRKYLSTMLMLGNILGTTMERKLCSQTSLAERATADTCQSIQNLFGIPAELMEPSQSLPEKGPVTISQPSVVKNYIQRHTFYHGHKKRMALRIWTRGSTSSIIQQYSGTRVRIKKTNSTFNGISQEVIQHMPVSCAGGQLPVLVKSESSLSIFYDREDLVPMEESEDSQSDSQTRISESQHSLKPNYLSQAKTDFSEQFQLLEDLQLKIAAKLLRSQIPPDVPPPLASGLVLKYPICLQCGRCSGLNCHHKLQTTSGPYLLIYPQLHLVRTPEGHGEVRLHLGFRLRIGKRSQISKYRERDRPVIRRSPISPSQRKAKIYTQASKSPTSTIDLQSGPSQSPAPVQVYIRRGQRSRPDLVEKTKTRAPGHYEFTQVHNLPESDSESTQNEKRAKVRTKKTSDSKYPMKRITKRLRKHRKFYTNSRTTIESPSRELAAHLRRKRIGATQTSTASLKRQPKKPSQPKFMQLLFQSLKRAFQTAHRVIASVGRKPVDGTRPDNLWASKNYYPKQNARDYCLPSSIKRDKRSADKLTPAGSTIKQEDILWGGTVQCRSAQQPRRAYSFQPRPLRLPKPTDSQSGIAFQTASVGQPLRTVQKDSSSRSKKNFYRNETSSQESKNLSTPGTRVQARGRILPGSPVKRTWHRHLKDKLTHKEHNHPSFYRERTPRGPSERTRHNPSWRNHRSPSERSQRSSLERRHHSPSQRSHCSPSRKNHSSPSERSWRSPSQRNHCSPPERSCHSLSERGLHSPSQRSHRGPSQRRHHSPSERSHRSPSERSHRSSSERRHRSPSQRSHRGPSERSHCSPSERRHRSPSQRSHRGPSERRHHSPSKRSHRSPARRSHRSPSERSHHSPSERSHHSPSERRHHSPSERSHCSPSERSHCSPSERRHRSPSERRHHSPSEKSHHSPSERSHHSPSERRRHSPLERSRHSLLERSHRSPSERRSHRSFERSHRRISERSHSPSEKSHLSPLERSRCSPSERRGHSSSGKTCHSPSERSHRSPSGMRQGRTSERSHRSSCERTRHSPSEMRPGRPSGRNHCSPSERSRRSPLKEGLKYSFPGERPSHSLSRDFKNQTTLLGTTHKNPKAGQVWRPEATR.

Disordered stretches follow at residues methionine 448–proline 467, proline 1045–leucine 1067, tyrosine 1181–lysine 1287, arginine 1326–glutamine 1346, and glutamine 1439–arginine 1984. Polar residues-rich tracts occupy residues leucine 450–threonine 463, threonine 1058–leucine 1067, and threonine 1205–alanine 1226. Over residues serine 1238–lysine 1247 the composition is skewed to basic and acidic residues. 2 stretches are compositionally biased toward polar residues: residues threonine 1458–valine 1471 and arginine 1492–threonine 1508. 2 stretches are compositionally biased toward basic and acidic residues: residues aspartate 1532–arginine 1558 and serine 1568–glutamate 1579. 3 repeat units span residues proline 1593–serine 1600, proline 1601–serine 1608, and proline 1609–serine 1616. Residues proline 1593–serine 1935 form a 27 X 8 AA approximate tandem repeat of P-S-E-R-S-H-H-S region. Residues serine 1599 to serine 1610 show a composition bias toward low complexity. The span at arginine 1620 to leucine 1630 shows a compositional bias: basic and acidic residues. The span at arginine 1636 to histidine 1647 shows a compositional bias: basic residues. 3 tandem repeats follow at residues proline 1641–serine 1648, proline 1649–serine 1656, and proline 1657–serine 1664. Residues serine 1648 to glutamate 1667 are compositionally biased toward basic and acidic residues. The segment covering arginine 1668–arginine 1679 has biased composition (basic residues). Over residues glycine 1680–glutamate 1691 the composition is skewed to basic and acidic residues. A run of 19 repeats spans residues proline 1681–serine 1688, proline 1689–serine 1696, proline 1697–glycine 1704, proline 1705–serine 1712, proline 1713–serine 1720, proline 1721–serine 1728, proline 1729–serine 1736, proline 1737–serine 1744, proline 1745–serine 1752, proline 1753–serine 1760, proline 1761–serine 1768, proline 1769–serine 1776, proline 1777–serine 1784, proline 1785–serine 1792, proline 1793–serine 1800, proline 1801–serine 1808, proline 1848–serine 1855, proline 1864–serine 1871, and proline 1880–serine 1887. The span at arginine 1692–arginine 1727 shows a compositional bias: basic residues. A compositionally biased stretch (basic and acidic residues) spans serine 1728 to glycine 1869. 3 stretches are compositionally biased toward basic and acidic residues: residues arginine 1895–proline 1917, proline 1928–leucine 1941, and arginine 1949–lysine 1959. Tandem repeats lie at residues serine 1921–proline 1928 and serine 1929–serine 1935. The segment covering asparagine 1960–histidine 1969 has biased composition (polar residues).

As to expression, expressed in sperm (at protein level).

This chain is Spermatogenesis-associated protein 31H1, found in Homo sapiens (Human).